A 357-amino-acid polypeptide reads, in one-letter code: Red-sensitive opsin (357 aa).

Residues Met-1–Val-49 are Extracellular-facing. Residue Asn-31 is glycosylated (N-linked (GlcNAc...) asparagine). A helical transmembrane segment spans residues Tyr-50–Ala-74. Topologically, residues Ser-75–Asn-86 are cytoplasmic. Residues Trp-87–Phe-112 form a helical membrane-spanning segment. At Phe-113–Glu-126 the chain is on the extracellular side. A disulfide bridge connects residues Cys-123 and Cys-200. Residues Gly-127–Trp-146 form a helical membrane-spanning segment. Residues Glu-147–Met-165 lie on the Cytoplasmic side of the membrane. The chain crosses the membrane as a helical span at residues Ala-166–Ser-189. Topologically, residues Arg-190–Ser-215 are extracellular. The chain crosses the membrane as a helical span at residues Tyr-216–Ile-243. At Arg-244–Arg-265 the chain is on the cytoplasmic side. Residues Met-266 to Ala-289 traverse the membrane as a helical segment. The Extracellular portion of the chain corresponds to Ala-290–His-297. Residues Pro-298–Met-322 form a helical membrane-spanning segment. N6-(retinylidene)lysine is present on Lys-309. Over Asn-323–Ala-357 the chain is Cytoplasmic.

It belongs to the G-protein coupled receptor 1 family. Opsin subfamily. Post-translationally, phosphorylated on some or all of the serine and threonine residues present in the C-terminal region. As to expression, the color pigments are found in the cone photoreceptor cells.

It localises to the membrane. Visual pigments are the light-absorbing molecules that mediate vision. They consist of an apoprotein, opsin, covalently linked to cis-retinal. The sequence is that of Red-sensitive opsin (R007) from Psalidodon fasciatus (Banded astyanax).